The chain runs to 367 residues: MKVLAAMSGGVDSSVAAARMVDAGHEVVGVHMALSTAPGTLRTGSRGCCSKEDAADARRVADVLGIPFYVWDFAEKFKEDVINDFVSSYARGETPNPCVRCNQQIKFAALSARAVALGFDTVATGHYARLSGGRLRRAVDRDKDQSYVLAVLTAQQLRHAAFPIGDTPKRQIRAEAARRGLAVANKPDSHDICFIPSGNTKAFLGERIGVRRGVVVDADGVVLASHDGVHGFTIGQRRGLGIAGPGPNGRPRYVTAIDADTATVHVGDVTDLDVQTLTGRAPVFTAGAAPSGPVDCVVQVRAHGETVSAVAELIGDALFVQLHAPLRGVARGQTLVLYRPDPAGDEVLGSATIAGASGLSTGGNPGA.

Residues Ala6–Ser13 and Met32 contribute to the ATP site. Catalysis depends on Cys101, which acts as the Nucleophile. Cys101 and Cys193 are oxidised to a cystine. Gly125 is an ATP binding site. The interval Lys143–Gln145 is interaction with tRNA. Catalysis depends on Cys193, which acts as the Cysteine persulfide intermediate.

This sequence belongs to the MnmA/TRMU family.

The protein localises to the cytoplasm. The catalysed reaction is S-sulfanyl-L-cysteinyl-[protein] + uridine(34) in tRNA + AH2 + ATP = 2-thiouridine(34) in tRNA + L-cysteinyl-[protein] + A + AMP + diphosphate + H(+). Catalyzes the 2-thiolation of uridine at the wobble position (U34) of tRNA, leading to the formation of s(2)U34. The sequence is that of tRNA-specific 2-thiouridylase MnmA from Mycobacterium tuberculosis (strain CDC 1551 / Oshkosh).